A 172-amino-acid polypeptide reads, in one-letter code: NAD(P)H-quinone oxidoreductase subunit J (172 aa).

It belongs to the complex I 30 kDa subunit family. As to quaternary structure, NDH-1 can be composed of about 15 different subunits; different subcomplexes with different compositions have been identified which probably have different functions.

The protein resides in the cellular thylakoid membrane. The enzyme catalyses a plastoquinone + NADH + (n+1) H(+)(in) = a plastoquinol + NAD(+) + n H(+)(out). The catalysed reaction is a plastoquinone + NADPH + (n+1) H(+)(in) = a plastoquinol + NADP(+) + n H(+)(out). Functionally, NDH-1 shuttles electrons from an unknown electron donor, via FMN and iron-sulfur (Fe-S) centers, to quinones in the respiratory and/or the photosynthetic chain. The immediate electron acceptor for the enzyme in this species is believed to be plastoquinone. Couples the redox reaction to proton translocation, and thus conserves the redox energy in a proton gradient. Cyanobacterial NDH-1 also plays a role in inorganic carbon-concentration. In Synechococcus sp. (strain ATCC 27144 / PCC 6301 / SAUG 1402/1) (Anacystis nidulans), this protein is NAD(P)H-quinone oxidoreductase subunit J.